The following is a 377-amino-acid chain: Alanine racemase (377 aa).

The Proton acceptor; specific for D-alanine role is filled by K35. K35 carries the N6-(pyridoxal phosphate)lysine modification. A substrate-binding site is contributed by R130. The active-site Proton acceptor; specific for L-alanine is Y260. Residue M312 participates in substrate binding.

It belongs to the alanine racemase family. Pyridoxal 5'-phosphate is required as a cofactor.

It catalyses the reaction L-alanine = D-alanine. It participates in amino-acid biosynthesis; D-alanine biosynthesis; D-alanine from L-alanine: step 1/1. Catalyzes the interconversion of L-alanine and D-alanine. May also act on other amino acids. The polypeptide is Alanine racemase (alr) (Leptothrix cholodnii (strain ATCC 51168 / LMG 8142 / SP-6) (Leptothrix discophora (strain SP-6))).